Reading from the N-terminus, the 110-residue chain is Hydrogenase maturation factor HypA (110 aa).

Ni(2+) is bound at residue H2. Zn(2+) contacts are provided by C70, C73, C86, and C89.

It belongs to the HypA/HybF family.

Functionally, involved in the maturation of [NiFe] hydrogenases. Required for nickel insertion into the metal center of the hydrogenase. This is Hydrogenase maturation factor HypA from Geobacter metallireducens (strain ATCC 53774 / DSM 7210 / GS-15).